We begin with the raw amino-acid sequence, 35 residues long: Tau/kappa-theraphotoxin-Pc1a (35 aa).

Disulfide bonds link cysteine 3/cysteine 17, cysteine 10/cysteine 22, and cysteine 16/cysteine 29. A Phenylalanine amide modification is found at phenylalanine 35.

It belongs to the neurotoxin 10 (Hwtx-1) family. 62 (Vatx) subfamily. As to expression, expressed by the venom gland.

It localises to the secreted. Its function is as follows. Selectively activates mammalian TRPV1, the capsaicin receptor, a non-selective cation channel expressed by sensory neurons of the pain pathway. Is less potent than VaTx2 and VaTx3. Interacts with distinct regions of the channel than capsaicin, since it only acts on the extracellular face of the channel, and capsaicin binds to the cytosolic side. Also activates avian TRPV1, which is insensitive to capsaicin. Significantly inhibits potassium channels Kv2.1/KCNB1. The polypeptide is Tau/kappa-theraphotoxin-Pc1a (Psalmopoeus cambridgei (Trinidad chevron tarantula)).